The primary structure comprises 157 residues: uncharacterized protein (157 aa).

The protein to E.coli YcjD and H.influenzae HI_0925.

This is an uncharacterized protein from Haemophilus influenzae (strain ATCC 51907 / DSM 11121 / KW20 / Rd).